Consider the following 179-residue polypeptide: MTRLENMYKKEVVPALIKRFGYSNPMAVPRLVKITLNMGVGEAATNKKVLENAVADMAKVSGQKPIVTKSRISVASFKIRNGWPIGCKTTLRRSKMYEFLDRLINISLPCVRDFRGIPPRSFDGRGNFNMGVKEQVVFPEIDFDAVDAIRGMDIAITTTANSDAEAKALLDAFNFPFRN.

Belongs to the universal ribosomal protein uL5 family. Part of the 50S ribosomal subunit; part of the 5S rRNA/L5/L18/L25 subcomplex. Contacts the 5S rRNA and the P site tRNA. Forms a bridge to the 30S subunit in the 70S ribosome.

Its function is as follows. This is one of the proteins that bind and probably mediate the attachment of the 5S RNA into the large ribosomal subunit, where it forms part of the central protuberance. In the 70S ribosome it contacts protein S13 of the 30S subunit (bridge B1b), connecting the 2 subunits; this bridge is implicated in subunit movement. Contacts the P site tRNA; the 5S rRNA and some of its associated proteins might help stabilize positioning of ribosome-bound tRNAs. The protein is Large ribosomal subunit protein uL5 of Xylella fastidiosa (strain M12).